The sequence spans 521 residues: Glucomannan 4-beta-mannosyltransferase 1 (521 aa).

The chain crosses the membrane as a helical span at residues 22–42; that stretch reads VIVPLLRLAVAVCLTMSVLLF. The active site involves D123. 2 residues coordinate substrate: D182 and D184. D276 is an active-site residue. The next 4 helical transmembrane spans lie at 355–375, 391–411, 471–491, and 495–515; these read IIAH…TIFV, IITL…FFWI, VTEL…LAFG, and FFIY…GYVG.

The protein belongs to the glycosyltransferase 2 family. Plant cellulose synthase-like A subfamily.

Its subcellular location is the golgi apparatus membrane. The catalysed reaction is GDP-mannose + (glucomannan)n = GDP + (glucomannan)n+1.. Its function is as follows. Possesses glucomannan synthase and mannan synthase activities in vitro. Mannan synthase consists of a 4-beta-mannosyltransferase activity on mannan using GDP-mannose. The beta-1,4-mannan product is the backbone for galactomannan synthesis by galactomannan galactosyltransferase. Galactomannan is a noncellulosic polysaccharides of plant cell wall. The protein is Glucomannan 4-beta-mannosyltransferase 1 of Oryza sativa subsp. japonica (Rice).